The following is a 330-amino-acid chain: D-alanine--D-alanine ligase (330 aa).

An ATP-grasp domain is found at 121–321 (NHYLKDFGVK…IKDVMTDIIE (201 aa)). 149-204 (VTRLGLPIFVKPNDGGSSFGVTKVKEVSAIQPAIAKAFGEGREVILERFIDGTEVT) provides a ligand contact to ATP. The Mg(2+) site is built by Asp275, Glu288, and Asn290.

The protein belongs to the D-alanine--D-alanine ligase family. The cofactor is Mg(2+). Mn(2+) is required as a cofactor.

The protein localises to the cytoplasm. The catalysed reaction is 2 D-alanine + ATP = D-alanyl-D-alanine + ADP + phosphate + H(+). Its pathway is cell wall biogenesis; peptidoglycan biosynthesis. Functionally, cell wall formation. This is D-alanine--D-alanine ligase from Parabacteroides distasonis (strain ATCC 8503 / DSM 20701 / CIP 104284 / JCM 5825 / NCTC 11152).